Consider the following 541-residue polypeptide: Protein wntless homolog (541 aa).

Topologically, residues Met1–Cys15 are cytoplasmic. A helical membrane pass occupies residues Ile16–Ala36. Over Pro37 to Lys232 the chain is Lumenal. The tract at residues Met101–Lys232 is interaction with Wnt proteins. A helical transmembrane segment spans residues Val233–Trp253. The Cytoplasmic portion of the chain corresponds to Arg254–Lys268. A helical membrane pass occupies residues Val269–Ile289. Residues Gly290–Arg303 are Lumenal-facing. Residues Gln304 to Met324 traverse the membrane as a helical segment. Over Asp325–His331 the chain is Cytoplasmic. A helical membrane pass occupies residues Ile332 to Phe352. Residues Asp353–Ala380 are Lumenal-facing. A helical membrane pass occupies residues Phe381–Phe401. Residues Gln402 to Arg431 are Cytoplasmic-facing. Residues Phe432–Val452 traverse the membrane as a helical segment. The Lumenal segment spans residues Ser453–Ser471. A helical membrane pass occupies residues Ala472–Tyr492. Topologically, residues Ala493–Glu541 are cytoplasmic.

Belongs to the wntless family. In terms of assembly, interacts with WNT3A. Interacts with WNT1, WNT3 and WNT5. Post-translationally, N-glycosylated. In terms of tissue distribution, expressed in the brain, skeletal muscle, heart muscle, lung, gut, liver, and kidney (at protein level). In the brain, expressed in the cortex, striatum, hippocampus and to a lesser extent in the cerebellum (at protein level). Expressed in kidney, lung, skin, intestine, brain, spinal cord, skeleton, eyes, excretion glands, tooth and palatal shelves. In the cerebellum, expressed in Purkinje cells.

Its subcellular location is the golgi apparatus membrane. It localises to the cytoplasmic vesicle membrane. It is found in the cell membrane. The protein localises to the endoplasmic reticulum membrane. The protein resides in the early endosome membrane. Regulates Wnt proteins sorting and secretion in a feedback regulatory mechanism. This reciprocal interaction plays a key role in the regulation of expression, subcellular location, binding and organelle-specific association of Wnt proteins. Also plays an important role in establishment of the anterior-posterior body axis formation during development. The sequence is that of Protein wntless homolog (Wls) from Mus musculus (Mouse).